Here is a 155-residue protein sequence, read N- to C-terminus: Ribosomal RNA large subunit methyltransferase H (155 aa).

S-adenosyl-L-methionine contacts are provided by residues Leu73, Gly104, and 123 to 128; that span reads LSPLTL.

Belongs to the RNA methyltransferase RlmH family. As to quaternary structure, homodimer.

The protein localises to the cytoplasm. It catalyses the reaction pseudouridine(1915) in 23S rRNA + S-adenosyl-L-methionine = N(3)-methylpseudouridine(1915) in 23S rRNA + S-adenosyl-L-homocysteine + H(+). Specifically methylates the pseudouridine at position 1915 (m3Psi1915) in 23S rRNA. This is Ribosomal RNA large subunit methyltransferase H from Pseudomonas putida (strain GB-1).